The chain runs to 232 residues: DnaJ homolog subfamily B member 8 (232 aa).

The region spanning 3 to 69 (NYYEVLGVQA…KKRSLYDRAG (67 aa)) is the J domain.

In terms of assembly, interacts with histone deacetylases HDAC4, HDAC6, and SIRT2, HDAC activity is required for antiaggregation.

Efficient suppressor of aggregation and toxicity of disease-associated polyglutamine proteins. The sequence is that of DnaJ homolog subfamily B member 8 (DNAJB8) from Homo sapiens (Human).